The following is a 210-amino-acid chain: Probable nicotinate-nucleotide adenylyltransferase (210 aa).

Belongs to the NadD family.

It catalyses the reaction nicotinate beta-D-ribonucleotide + ATP + H(+) = deamido-NAD(+) + diphosphate. It participates in cofactor biosynthesis; NAD(+) biosynthesis; deamido-NAD(+) from nicotinate D-ribonucleotide: step 1/1. Functionally, catalyzes the reversible adenylation of nicotinate mononucleotide (NaMN) to nicotinic acid adenine dinucleotide (NaAD). The polypeptide is Probable nicotinate-nucleotide adenylyltransferase (Vesicomyosocius okutanii subsp. Calyptogena okutanii (strain HA)).